Consider the following 96-residue polypeptide: Small ribosomal subunit protein bS6 (96 aa).

Belongs to the bacterial ribosomal protein bS6 family.

Its function is as follows. Binds together with bS18 to 16S ribosomal RNA. The chain is Small ribosomal subunit protein bS6 from Streptococcus sanguinis (strain SK36).